A 329-amino-acid chain; its full sequence is MYG1 protein (329 aa).

The protein belongs to the MYG1 family.

This Dictyostelium discoideum (Social amoeba) protein is MYG1 protein.